The primary structure comprises 130 residues: Glycine cleavage system H protein (130 aa).

The Lipoyl-binding domain occupies 22-103 (KAYIGISDCA…PYGSWIIAVE (82 aa)). Position 63 is an N6-lipoyllysine (lysine 63).

The protein belongs to the GcvH family. In terms of assembly, the glycine cleavage system is composed of four proteins: P, T, L and H. The cofactor is (R)-lipoate.

Functionally, the glycine cleavage system catalyzes the degradation of glycine. The H protein shuttles the methylamine group of glycine from the P protein to the T protein. This Clostridium botulinum (strain Kyoto / Type A2) protein is Glycine cleavage system H protein.